Here is a 358-residue protein sequence, read N- to C-terminus: Diels-Alderase phmD (358 aa).

This sequence belongs to the Diels-Alderase family.

The protein operates within mycotoxin biosynthesis. In terms of biological role, diels-Alderase; part of the gene cluster that mediates the biosynthesis of the mycotoxins phomacins, leucine-derived cytochalasans with potent actin polymerization-inhibitory activities and monocot-specific antigerminative activities. The first step in the pathway is catalyzed by the hybrid PKS-NRPS phmA, assisted by the enoyl reductase phmE, that are responsible for fusion of the leucine precursor and the polyketide backbone to produce a 2-pyrrolidone intermediate. The polyketide synthase module (PKS) of phmA is responsible for the synthesis of the polyketide backbone and the downstream nonribosomal peptide synthetase (NRPS) amidates the carboxyl end of the polyketide with the leucine precursor. Because phmA lacks a designated enoylreductase (ER) domain, the required activity is provided the enoyl reductase phmE. Reduction by the hydrolyase phmG, followed by dehydration and intra-molecular Diels-Alder cyclization by the Diels-Alderase phmD then yield the required isoindolone-fused macrocycle. A number of oxidative steps catalyzed by the tailoring cytochrome P450 monooxygenase phmB, the FAD-linked oxidoreductase phmC and the short-chain dehydrogenase/reductase phmF, are further required to afford the final products, phomacin D and phomacin E. The protein is Diels-Alderase phmD of Phaeosphaeria nodorum (strain SN15 / ATCC MYA-4574 / FGSC 10173) (Glume blotch fungus).